The primary structure comprises 415 residues: Multidrug resistance protein MdtA (415 aa).

An N-terminal signal peptide occupies residues 1–21 (MKGSYKSRWVIVIVVVIAAIA). Disordered regions lie at residues 32–60 (SRSAAPGATKQAQQSPAGGRRGMRSGPLA) and 392–415 (EAQSATTPEEKATSREYAKKGARS). The segment covering 399–415 (PEEKATSREYAKKGARS) has biased composition (basic and acidic residues).

It belongs to the membrane fusion protein (MFP) (TC 8.A.1) family. Part of a tripartite efflux system composed of MdtA, MdtB and MdtC.

It is found in the cell inner membrane. Its function is as follows. The MdtABC tripartite complex confers resistance against novobiocin and deoxycholate. This Escherichia coli (strain K12 / MC4100 / BW2952) protein is Multidrug resistance protein MdtA.